A 323-amino-acid polypeptide reads, in one-letter code: tRNA N6-adenosine threonylcarbamoyltransferase (323 aa).

His105, His109, and Tyr126 together coordinate Fe cation. Substrate contacts are provided by residues 126-130 (YVSGG), Asp158, Gly171, Glu175, and Asn255. Asp283 is a Fe cation binding site.

The protein belongs to the KAE1 / TsaD family. As to quaternary structure, monomer. Component of the KEOPS complex that consists of Kae1, Bud32, Cgi121 and Pcc1; the whole complex dimerizes. Fe(2+) is required as a cofactor.

Its subcellular location is the cytoplasm. It carries out the reaction L-threonylcarbamoyladenylate + adenosine(37) in tRNA = N(6)-L-threonylcarbamoyladenosine(37) in tRNA + AMP + H(+). Its function is as follows. Required for the formation of a threonylcarbamoyl group on adenosine at position 37 (t(6)A37) in tRNAs that read codons beginning with adenine. Is a component of the KEOPS complex that is probably involved in the transfer of the threonylcarbamoyl moiety of threonylcarbamoyl-AMP (TC-AMP) to the N6 group of A37. Kae1 likely plays a direct catalytic role in this reaction, but requires other protein(s) of the complex to fulfill this activity. This Archaeoglobus fulgidus (strain ATCC 49558 / DSM 4304 / JCM 9628 / NBRC 100126 / VC-16) protein is tRNA N6-adenosine threonylcarbamoyltransferase.